A 61-amino-acid chain; its full sequence is Small ribosomal subunit protein uS14 (61 aa).

Positions 24, 27, 40, and 43 each coordinate Zn(2+).

The protein belongs to the universal ribosomal protein uS14 family. Zinc-binding uS14 subfamily. In terms of assembly, part of the 30S ribosomal subunit. Contacts proteins S3 and S10. Zn(2+) is required as a cofactor.

Its function is as follows. Binds 16S rRNA, required for the assembly of 30S particles and may also be responsible for determining the conformation of the 16S rRNA at the A site. This is Small ribosomal subunit protein uS14 from Deinococcus geothermalis (strain DSM 11300 / CIP 105573 / AG-3a).